The following is a 205-amino-acid chain: Guanylate kinase (205 aa).

The region spanning glycine 7–asparagine 185 is the Guanylate kinase-like domain. Alanine 14–threonine 21 is a binding site for ATP.

This sequence belongs to the guanylate kinase family.

It is found in the cytoplasm. The catalysed reaction is GMP + ATP = GDP + ADP. Functionally, essential for recycling GMP and indirectly, cGMP. The sequence is that of Guanylate kinase (gmk) from Neisseria meningitidis serogroup B (strain ATCC BAA-335 / MC58).